The following is a 194-amino-acid chain: Imidazoleglycerol-phosphate dehydratase (194 aa).

Belongs to the imidazoleglycerol-phosphate dehydratase family.

The protein localises to the cytoplasm. The catalysed reaction is D-erythro-1-(imidazol-4-yl)glycerol 3-phosphate = 3-(imidazol-4-yl)-2-oxopropyl phosphate + H2O. It functions in the pathway amino-acid biosynthesis; L-histidine biosynthesis; L-histidine from 5-phospho-alpha-D-ribose 1-diphosphate: step 6/9. This Ruminiclostridium cellulolyticum (strain ATCC 35319 / DSM 5812 / JCM 6584 / H10) (Clostridium cellulolyticum) protein is Imidazoleglycerol-phosphate dehydratase.